The chain runs to 86 residues: Acyl-CoA-binding protein homolog 1 (86 aa).

The region spanning 1–86 (MTLSFDDAAA…VEELIAKYGA (86 aa)) is the ACB domain. Residues Lys13, 28-32 (YALFK), Lys50, Lys54, and Tyr73 contribute to the an acyl-CoA site.

It belongs to the ACBP family.

Binds medium- and long-chain acyl-CoA esters with very high affinity and may function as an intracellular carrier of acyl-CoA esters. The polypeptide is Acyl-CoA-binding protein homolog 1 (acbp-1) (Caenorhabditis elegans).